Consider the following 263-residue polypeptide: 3-methyl-2-oxobutanoate hydroxymethyltransferase (263 aa).

Mg(2+)-binding residues include Asp-44 and Asp-83. Residues 44-45 (DS), Asp-83, and Lys-112 contribute to the 3-methyl-2-oxobutanoate site. Glu-114 serves as a coordination point for Mg(2+). Catalysis depends on Glu-181, which acts as the Proton acceptor.

It belongs to the PanB family. Homodecamer; pentamer of dimers. It depends on Mg(2+) as a cofactor.

It localises to the cytoplasm. It carries out the reaction 3-methyl-2-oxobutanoate + (6R)-5,10-methylene-5,6,7,8-tetrahydrofolate + H2O = 2-dehydropantoate + (6S)-5,6,7,8-tetrahydrofolate. It participates in cofactor biosynthesis; (R)-pantothenate biosynthesis; (R)-pantoate from 3-methyl-2-oxobutanoate: step 1/2. Catalyzes the reversible reaction in which hydroxymethyl group from 5,10-methylenetetrahydrofolate is transferred onto alpha-ketoisovalerate to form ketopantoate. This Nitrosospira multiformis (strain ATCC 25196 / NCIMB 11849 / C 71) protein is 3-methyl-2-oxobutanoate hydroxymethyltransferase.